The primary structure comprises 310 residues: p-hydroxybenzoic acid efflux pump subunit AaeA (310 aa).

Residues 12-32 traverse the membrane as a helical segment; the sequence is AITVVLVILAFIAIFNAWVYY.

The protein belongs to the membrane fusion protein (MFP) (TC 8.A.1) family.

It is found in the cell inner membrane. In terms of biological role, forms an efflux pump with AaeB. This chain is p-hydroxybenzoic acid efflux pump subunit AaeA, found in Shigella sonnei (strain Ss046).